We begin with the raw amino-acid sequence, 86 residues long: MNTFFQIMTQTEFFATGLAYLGAGISILAAGLAGIGQGLAAARAVEAVGRQPEASGKITVTMILGQAMVETSGIYALIIAFILSSK.

Transmembrane regions (helical) follow at residues 13–33 and 63–83; these read FFAT…AGLA and ILGQ…AFIL.

It belongs to the ATPase C chain family. As to quaternary structure, F-type ATPases have 2 components, F(1) - the catalytic core - and F(0) - the membrane proton channel. F(1) has five subunits: alpha(3), beta(3), gamma(1), delta(1), epsilon(1). F(0) has three main subunits: a(1), b(2) and c(10-14). The alpha and beta chains form an alternating ring which encloses part of the gamma chain. F(1) is attached to F(0) by a central stalk formed by the gamma and epsilon chains, while a peripheral stalk is formed by the delta and b chains.

It is found in the cell membrane. In terms of biological role, f(1)F(0) ATP synthase produces ATP from ADP in the presence of a proton or sodium gradient. F-type ATPases consist of two structural domains, F(1) containing the extramembraneous catalytic core and F(0) containing the membrane proton channel, linked together by a central stalk and a peripheral stalk. During catalysis, ATP synthesis in the catalytic domain of F(1) is coupled via a rotary mechanism of the central stalk subunits to proton translocation. Functionally, key component of the F(0) channel; it plays a direct role in translocation across the membrane. A homomeric c-ring of between 10-14 subunits forms the central stalk rotor element with the F(1) delta and epsilon subunits. The protein is ATP synthase subunit c of Acholeplasma laidlawii (strain PG-8A).